A 401-amino-acid chain; its full sequence is Deoxyhypusine synthase-like protein (401 aa).

The protein belongs to the deoxyhypusine synthase family.

The sequence is that of Deoxyhypusine synthase-like protein from Thermosynechococcus vestitus (strain NIES-2133 / IAM M-273 / BP-1).